The following is a 402-amino-acid chain: Phosphoglycerate kinase (402 aa).

Substrate is bound by residues 24–26 (DFN), Arg40, 63–66 (HFGR), Arg122, and Arg155. Residues Lys206, Gly297, Glu328, and 358–361 (GGDS) each bind ATP.

Belongs to the phosphoglycerate kinase family. In terms of assembly, monomer.

The protein resides in the cytoplasm. The enzyme catalyses (2R)-3-phosphoglycerate + ATP = (2R)-3-phospho-glyceroyl phosphate + ADP. The protein operates within carbohydrate degradation; glycolysis; pyruvate from D-glyceraldehyde 3-phosphate: step 2/5. The sequence is that of Phosphoglycerate kinase from Prochlorococcus marinus (strain MIT 9301).